We begin with the raw amino-acid sequence, 255 residues long: Type III pantothenate kinase (255 aa).

An ATP-binding site is contributed by 6–13 (DVGNTNTV). Residues Tyr-100 and 107 to 110 (GADR) each bind substrate. Catalysis depends on Asp-109, which acts as the Proton acceptor. Asp-129 provides a ligand contact to K(+). ATP is bound at residue Thr-132. Position 184 (Thr-184) interacts with substrate.

Belongs to the type III pantothenate kinase family. In terms of assembly, homodimer. NH4(+) serves as cofactor. The cofactor is K(+).

It is found in the cytoplasm. It carries out the reaction (R)-pantothenate + ATP = (R)-4'-phosphopantothenate + ADP + H(+). It functions in the pathway cofactor biosynthesis; coenzyme A biosynthesis; CoA from (R)-pantothenate: step 1/5. Catalyzes the phosphorylation of pantothenate (Pan), the first step in CoA biosynthesis. This chain is Type III pantothenate kinase, found in Syntrophotalea carbinolica (strain DSM 2380 / NBRC 103641 / GraBd1) (Pelobacter carbinolicus).